The following is a 454-amino-acid chain: Cerebellar degeneration-related protein 2 (454 aa).

Coiled coils occupy residues 44-142 and 192-265; these read ELED…SGQG and EEEN…QSEH. Residues 134–153 form a disordered region; sequence EELKSSGQGRRSPGKCDQEK. At Ser-311 the chain carries Phosphoserine. Residues 346–380 are a coiled coil; the sequence is LHEVDTQYSALKVKYEELLKKCQEEQDSLSHKAVQ.

The protein belongs to the CDR2 family.

This chain is Cerebellar degeneration-related protein 2 (CDR2), found in Homo sapiens (Human).